The chain runs to 597 residues: Fructan 1-exohydrolase w1 (597 aa).

A signal peptide spans 1–20 (MAQAWAFLLPVLVFGSYVTS). Asp-76 is an active-site residue. N-linked (GlcNAc...) asparagine glycosylation is found at Asn-169, Asn-237, and Asn-249. Residues Cys-447 and Cys-493 are joined by a disulfide bond. A glycan (N-linked (GlcNAc...) asparagine) is linked at Asn-568.

It belongs to the glycosyl hydrolase 32 family.

It catalyses the reaction Hydrolysis of terminal, non-reducing (2-&gt;1)-linked beta-D-fructofuranose residues in fructans.. Inhibited by sucrose. Hydrolyzes inulin-type beta-(2,1)-fructans and beta-(2,1)-linkages in branched fructans. Has low activity against beta-(2,6)-linked fructans. May play a role as a beta-(2,1)-trimmer during graminan biosynthesis. The chain is Fructan 1-exohydrolase w1 from Triticum aestivum (Wheat).